The primary structure comprises 236 residues: Mitochondrial-abundant heat soluble protein (236 aa).

A mitochondrion-targeting transit peptide spans 1–73 (MSRYLLRDVQ…AARAGVVLRG (73 aa)). Disordered regions lie at residues 102–135 (RIHS…NEAA) and 165–209 (RSNG…EIVA). 2 stretches are compositionally biased toward polar residues: residues 105–126 (SQSS…NSPQ) and 192–202 (APDSSKNTKSV). The MAHS motif signature appears at 126–143 (QPEGKANEAAERAKQFMN).

The protein resides in the mitochondrion. Functionally, mitochondrial heat soluble protein acting as a molecular shield in water-deficient condition. In Ramazzottius varieornatus (Water bear), this protein is Mitochondrial-abundant heat soluble protein.